The following is a 190-amino-acid chain: Threonylcarbamoyl-AMP synthase (190 aa).

One can recognise a YrdC-like domain in the interval 7–190 (TGSIAAAVDL…ALTGELFRQG (184 aa)).

This sequence belongs to the SUA5 family. TsaC subfamily.

The protein resides in the cytoplasm. It catalyses the reaction L-threonine + hydrogencarbonate + ATP = L-threonylcarbamoyladenylate + diphosphate + H2O. Required for the formation of a threonylcarbamoyl group on adenosine at position 37 (t(6)A37) in tRNAs that read codons beginning with adenine. Catalyzes the conversion of L-threonine, HCO(3)(-)/CO(2) and ATP to give threonylcarbamoyl-AMP (TC-AMP) as the acyladenylate intermediate, with the release of diphosphate. The polypeptide is Threonylcarbamoyl-AMP synthase (Salmonella choleraesuis (strain SC-B67)).